Here is a 1021-residue protein sequence, read N- to C-terminus: MKRKCLSKRLMLAITMATIFTVNSTLPIYAAVDKNNATAAVQNESKRYTVSYLKTLNYYDLVDLLVKTEIENLPDLFQYSSDAKEFYGNKTRMSFIMDEIGRRAPQYTEIDHKGIPTLVEVVRAGFYLGFHNKELNEINKRSFKERVIPSILAIQKNPNFKLGTEVQDKIVSATGLLAGNETAPPEVVNNFTPILQDCIKNIDRYALDDLKSKALFNVLAAPTYDITEYLRATKEKPENTPWYGKIDGFINELKKLALYGKINDNNSWIIDNGIYHIAPLGKLHSNNKIGIETLTEVMKVYPYLSMQHLQSADQIKRHYDSKDAEGNKIPLDKFKKEGKEKYCPKTYTFDDGKVIIKAGARVEEEKVKRLYWASKEVNSQFFRVYGIDKPLEEGNPDDILTMVIYNSPEEYKLNSVLYGYDTNNGGMYIEPEGTFFTYEREAQESTYTLEELFRHEYTHYLQGRYAVPGQWGRTKLYDNDRLTWYEEGGAELFAGSTRTSGILPRKSIVSNIHNTTRNNRYKLSDTVHSKYGASFEFYNYACMFMDYMYNKDMGILNKLNDLAKNNDVDGYDNYIRDLSSNYALNDKYQDHMQERIDNYENLTVPFVADDYLVRHAYKNPNEIYSEISEVAKLKDAKSEVKKSQYFSTFTLRGSYTGGASKGKLEDQKAMNKFIDDSLKKLDTYSWSGYKTLTAYFTNYKVDSSNRVTYDVVFHGYLPNEGDSKNSLPYGKINGTYKGTEKEKIKFSSEGSFDPDGKIVSYEWDFGDGNKSNEENPEHSYDKVGTYTVKLKVTDDKGESSVSTTTAEIKDLSENKLPVIYMHVPKSGALNQKVVFYGKGTYDPDGSIAGYQWDFGDGSDFSSEQNPSHVYTKKGEYTVTLRVMDSSGQMSEKTMKIKITDPVYPIGTEKEPNNSKETASGPIVPGIPVSGTIENTSDQDYFYFDVITPGEVKIDINKLGYGGATWVVYDENNNAVSYATDDGQNLSGKFKADKPGRYYIHLYMFNGSYMPYRINIEGSVGR.

The first 30 residues, 1–30 (MKRKCLSKRLMLAITMATIFTVNSTLPIYA), serve as a signal peptide directing secretion. The propeptide occupies 31 to 40 (AVDKNNATAA). An activator domain region spans residues 41 to 320 (VQNESKRYTV…SADQIKRHYD (280 aa)). Residues 41–717 (VQNESKRYTV…TYDVVFHGYL (677 aa)) are S1 metalloprotease domain. Residues 330–601 (PLDKFKKEGK…MQERIDNYEN (272 aa)) form a catalytic subdomain region. Residue Asp421 coordinates Zn(2+). Glu430 lines the Ca(2+) pocket. A Zn(2+)-binding site is contributed by His455. Glu456 is a catalytic residue. His459 contributes to the Zn(2+) binding site. The Ca(2+) site is built by Gly463, Val467, and Gly469. Residue Glu487 participates in Zn(2+) binding. The helper subdomain stretch occupies residues 609–721 (DDYLVRHAYK…VFHGYLPNEG (113 aa)). The segment at 718-810 (PNEGDSKNSL…VSTTTAEIKD (93 aa)) is S2a domain. Positions 725, 726, 753, 755, 794, 814, 815, 842, 844, 884, 908, 910, 912, 913, 931, 937, 938, and 939 each coordinate Ca(2+). The PKD 1 domain maps to 727 to 808 (LPYGKINGTY…SSVSTTTAEI (82 aa)). The segment at 811–904 (LSENKLPVIY…KIKITDPVYP (94 aa)) is S2b domain. The region spanning 816–905 (LPVIYMHVPK…IKITDPVYPI (90 aa)) is the PKD 2 domain. The segment at 903–922 (YPIGTEKEPNNSKETASGPI) is disordered. The segment at 905–1021 (IGTEKEPNNS…RINIEGSVGR (117 aa)) is S3 collagen-binding domain. The tract at residues 1002–1004 (YMF) is collagen-binding.

Belongs to the peptidase M9B family. Collagenase subfamily. The cofactor is Ca(2+). Zn(2+) is required as a cofactor. In terms of processing, upon purification gives rise to 98 kDa, 105 kDa and 116 kDa (full-length) proteins, all of which have the same N-terminus.

The protein localises to the secreted. The enzyme catalyses Digestion of native collagen in the triple helical region at Xaa-|-Gly bonds. With synthetic peptides, a preference is shown for Gly at P3 and P1', Pro and Ala at P2 and P2', and hydroxyproline, Ala or Arg at P3'.. Its activity is regulated as follows. Inhibited by EDTA. Inhibited by 1-10-phenanthroline. Inhibited by broad-spectrum zinc metalloprotease inhibitor batimastat. N-aryl mercaptoacetamide-based inhibitors have been isolated that act on clostridial collagenases with submicromolar affinity while having negligibile activity on human collagenases. Its function is as follows. Clostridial collagenases are among the most efficient degraders of eukaryotic collagen known; saprophytes use collagen as a carbon source while pathogens additionally digest collagen to aid in host colonization. Has both tripeptidylcarboxypeptidase on Gly-X-Y and endopeptidase activities; the endopeptidase cuts within the triple helix region of collagen while tripeptidylcarboxypeptidase successively digests the exposed ends, thus clostridial collagenases can digest large sections of collagen. The full-length protein has collagenase activity, while both the 116 kDa and 98 kDa forms act on gelatin. In vitro digestion of soluble calf skin collagen fibrils requires both ColG and ColH; ColG forms missing the second collagen-binding domain is also synergistic with ColH, although their overall efficiency is decreased. Digestion of collagen requires Ca(2+) and is inhibited by EDTA. The activator domain (residues 119-388) and catalytic subdomain (330-601) open and close around substrate allowing digestion when the protein is closed. The protein is Collagenase ColH of Hathewaya histolytica (Clostridium histolyticum).